Consider the following 412-residue polypeptide: DNA primase DnaG (412 aa).

A Toprim domain is found at 165 to 243 (PELIIVEGRA…KLDYVARAPT (79 aa)). Mg(2+) is bound by residues Glu-171, Asp-216, and Asp-218.

This sequence belongs to the archaeal DnaG primase family. As to quaternary structure, forms a ternary complex with MCM helicase and DNA. Component of the archaeal exosome complex. It depends on Mg(2+) as a cofactor.

It catalyses the reaction ssDNA + n NTP = ssDNA/pppN(pN)n-1 hybrid + (n-1) diphosphate.. Functionally, RNA polymerase that catalyzes the synthesis of short RNA molecules used as primers for DNA polymerase during DNA replication. Also part of the exosome, which is a complex involved in RNA degradation. Acts as a poly(A)-binding protein that enhances the interaction between heteromeric, adenine-rich transcripts and the exosome. The chain is DNA primase DnaG from Sulfolobus acidocaldarius (strain ATCC 33909 / DSM 639 / JCM 8929 / NBRC 15157 / NCIMB 11770).